The following is an 82-amino-acid chain: Cytochrome b559 subunit alpha (82 aa).

A helical membrane pass occupies residues 21-35 (VIHSITIPALFIAGW). H23 serves as a coordination point for heme.

The protein belongs to the PsbE/PsbF family. In terms of assembly, heterodimer of an alpha subunit and a beta subunit. PSII is composed of 1 copy each of membrane proteins PsbA, PsbB, PsbC, PsbD, PsbE, PsbF, PsbH, PsbI, PsbJ, PsbK, PsbL, PsbM, PsbT, PsbX, PsbY, PsbZ, Psb30/Ycf12, peripheral proteins PsbO, CyanoQ (PsbQ), PsbU, PsbV and a large number of cofactors. It forms dimeric complexes. It depends on heme b as a cofactor.

The protein resides in the cellular thylakoid membrane. This b-type cytochrome is tightly associated with the reaction center of photosystem II (PSII). PSII is a light-driven water:plastoquinone oxidoreductase that uses light energy to abstract electrons from H(2)O, generating O(2) and a proton gradient subsequently used for ATP formation. It consists of a core antenna complex that captures photons, and an electron transfer chain that converts photonic excitation into a charge separation. The chain is Cytochrome b559 subunit alpha from Nostoc punctiforme (strain ATCC 29133 / PCC 73102).